Reading from the N-terminus, the 297-residue chain is Rhomboid-type serine protease 2 (297 aa).

6 helical membrane-spanning segments follow: residues 14 to 34 (IQHP…IFLL), 60 to 80 (ISFY…LVAL), 98 to 118 (IVLN…SIGF), 120 to 140 (PDEA…YWAI), 155 to 175 (LVVP…IVIP), and 179 to 199 (FIGH…YLDV). S128 acts as the Nucleophile in catalysis. The active site involves H182. A disordered region spans residues 268-297 (DLEAGTRSRGNSSVDPTTSFPGTGQTLGTQ). Over residues 275–297 (SRGNSSVDPTTSFPGTGQTLGTQ) the composition is skewed to polar residues.

This sequence belongs to the peptidase S54 family.

The protein localises to the golgi apparatus membrane. It is found in the golgi apparatus. It localises to the cis-Golgi network membrane. It carries out the reaction Cleaves type-1 transmembrane domains using a catalytic dyad composed of serine and histidine that are contributed by different transmembrane domains.. Functionally, probable rhomboid-type serine protease that catalyzes intramembrane proteolysis. This chain is Rhomboid-type serine protease 2 (RBD2), found in Yarrowia lipolytica (strain CLIB 122 / E 150) (Yeast).